The sequence spans 408 residues: Imidazolonepropionase (408 aa).

Fe(3+)-binding residues include histidine 73 and histidine 75. Residues histidine 73 and histidine 75 each contribute to the Zn(2+) site. Residues arginine 82, tyrosine 145, and histidine 178 each contribute to the 4-imidazolone-5-propanoate site. Tyrosine 145 contributes to the N-formimidoyl-L-glutamate binding site. Histidine 243 is a binding site for Fe(3+). Histidine 243 provides a ligand contact to Zn(2+). Glutamine 246 serves as a coordination point for 4-imidazolone-5-propanoate. Aspartate 318 lines the Fe(3+) pocket. Position 318 (aspartate 318) interacts with Zn(2+). Residues asparagine 320 and glycine 322 each contribute to the N-formimidoyl-L-glutamate site. 4-imidazolone-5-propanoate is bound at residue serine 323.

The protein belongs to the metallo-dependent hydrolases superfamily. HutI family. The cofactor is Zn(2+). Fe(3+) serves as cofactor.

Its subcellular location is the cytoplasm. The enzyme catalyses 4-imidazolone-5-propanoate + H2O = N-formimidoyl-L-glutamate. It functions in the pathway amino-acid degradation; L-histidine degradation into L-glutamate; N-formimidoyl-L-glutamate from L-histidine: step 3/3. Functionally, catalyzes the hydrolytic cleavage of the carbon-nitrogen bond in imidazolone-5-propanoate to yield N-formimidoyl-L-glutamate. It is the third step in the universal histidine degradation pathway. In Shewanella piezotolerans (strain WP3 / JCM 13877), this protein is Imidazolonepropionase.